Here is a 326-residue protein sequence, read N- to C-terminus: Glyoxylate/hydroxypyruvate reductase B (326 aa).

Active-site residues include R237 and E266. H285 functions as the Proton donor in the catalytic mechanism.

It belongs to the D-isomer specific 2-hydroxyacid dehydrogenase family. GhrB subfamily. In terms of assembly, homodimer.

Its subcellular location is the cytoplasm. The enzyme catalyses glycolate + NADP(+) = glyoxylate + NADPH + H(+). It catalyses the reaction (R)-glycerate + NAD(+) = 3-hydroxypyruvate + NADH + H(+). It carries out the reaction (R)-glycerate + NADP(+) = 3-hydroxypyruvate + NADPH + H(+). Its function is as follows. Catalyzes the NADPH-dependent reduction of glyoxylate and hydroxypyruvate into glycolate and glycerate, respectively. The chain is Glyoxylate/hydroxypyruvate reductase B from Yersinia enterocolitica serotype O:8 / biotype 1B (strain NCTC 13174 / 8081).